Here is a 332-residue protein sequence, read N- to C-terminus: L-lactate dehydrogenase A chain (332 aa).

Ala-2 is modified (N-acetylalanine). An N6-acetyllysine; alternate modification is found at Lys-5. At Lys-5 the chain carries N6-succinyllysine; alternate. Tyr-10 is modified (phosphotyrosine). Lys-14 carries the post-translational modification N6-acetyllysine. Thr-18 bears the Phosphothreonine mark. 29–57 (GAVGMACAISILMKDLADELALVDVIEDK) contacts NAD(+). Position 57 is an N6-acetyllysine; alternate (Lys-57). Lys-57 participates in a covalent cross-link: Glycyl lysine isopeptide (Lys-Gly) (interchain with G-Cter in SUMO2); alternate. N6-acetyllysine is present on Lys-81. Arg-99 contacts NAD(+). Arg-106 contacts substrate. Lys-118 bears the N6-acetyllysine; alternate mark. Lys-118 is subject to N6-succinyllysine; alternate. The residue at position 126 (Lys-126) is an N6-acetyllysine. NAD(+) is bound at residue Asn-138. Substrate is bound by residues Asn-138 and Arg-169. Catalysis depends on His-193, which acts as the Proton acceptor. N6-acetyllysine occurs at positions 224 and 232. Position 239 is a phosphotyrosine (Tyr-239). At Lys-243 the chain carries N6-acetyllysine. Thr-248 is a substrate binding site. Thr-309 carries the post-translational modification Phosphothreonine. Ser-310 carries the post-translational modification Phosphoserine. Residue Lys-318 is modified to N6-acetyllysine; alternate. Position 318 is an N6-succinyllysine; alternate (Lys-318). Thr-322 is subject to Phosphothreonine.

The protein belongs to the LDH/MDH superfamily. LDH family. In terms of assembly, homotetramer. Interacts with PTEN upstream reading frame protein MP31. Interacts with folliculin FLCN; the interaction is direct and inhibits enzymatic activity. Post-translationally, ISGylated. As to expression, predominantly expressed in anaerobic tissues such as skeletal muscle and liver.

The protein resides in the cytoplasm. The catalysed reaction is (S)-lactate + NAD(+) = pyruvate + NADH + H(+). It participates in fermentation; pyruvate fermentation to lactate; (S)-lactate from pyruvate: step 1/1. Its activity is regulated as follows. Fermentation of pyruvate to lactate is inhibited when bound to folliculin FLCN, perhaps partly by FLCN preventing binding of cofactor NADH. Its function is as follows. Interconverts simultaneously and stereospecifically pyruvate and lactate with concomitant interconversion of NADH and NAD(+). The sequence is that of L-lactate dehydrogenase A chain from Homo sapiens (Human).